The following is a 454-amino-acid chain: tRNA modification GTPase MnmE (454 aa).

(6S)-5-formyl-5,6,7,8-tetrahydrofolate-binding residues include Arg23, Glu80, and Lys120. Residues 216 to 377 enclose the TrmE-type G domain; it reads GMKVVIAGRP…LRNHLKQSMG (162 aa). A K(+)-binding site is contributed by Asn226. Residues 226–231, 245–251, 270–273, 335–338, and 358–360 each bind GTP; these read NAGKSS, TDIAGTT, DTAG, NKAD, and SAR. Ser230 contributes to the Mg(2+) binding site. K(+) is bound by residues Thr245, Ile247, and Thr250. Thr251 contributes to the Mg(2+) binding site. Lys454 provides a ligand contact to (6S)-5-formyl-5,6,7,8-tetrahydrofolate.

The protein belongs to the TRAFAC class TrmE-Era-EngA-EngB-Septin-like GTPase superfamily. TrmE GTPase family. Homodimer. Heterotetramer of two MnmE and two MnmG subunits. The cofactor is K(+).

The protein resides in the cytoplasm. In terms of biological role, exhibits a very high intrinsic GTPase hydrolysis rate. Involved in the addition of a carboxymethylaminomethyl (cmnm) group at the wobble position (U34) of certain tRNAs, forming tRNA-cmnm(5)s(2)U34. This is tRNA modification GTPase MnmE from Escherichia coli O6:K15:H31 (strain 536 / UPEC).